The following is a 313-amino-acid chain: NF-kappa-B inhibitor delta (313 aa).

6 ANK repeats span residues 48–83 (EGDTLLHLFAARGLRWAAYAAAEVLQVYRRLDIREH), 84–113 (KGKTPLLVAAAANQPLIVEDLLNLGAEPNA), 117–146 (QGRSVLHVAATYGLPGVLLAVLNSGVQVDL), 152–201 (EGLT…NHTS), 206–236 (SNKTVLHLAVQAANPTLVQLLLELPRGDLRT), and 243–276 (HGNTALHMAAALPPGPAQEAIVRHLLAAGADPTL).

This sequence belongs to the NF-kappa-B inhibitor family. As to quaternary structure, interacts with NFKB1, RELA and RELB; in the nucleus.

Its subcellular location is the nucleus. Functionally, regulates the expression of IL-2, IL-6, and other cytokines through regulation on NF-kappa-B activity. Functions in the regulation of inflammatory responses. Involved in the induction of T helper 17 cells (Th17) differentiation upon recognition of antigen by T cell antigen receptor (TCR). May also regulate TCR-induced negative selection of thymocytes. This is NF-kappa-B inhibitor delta (NFKBID) from Homo sapiens (Human).